Consider the following 320-residue polypeptide: Cytochrome f (320 aa).

A signal peptide spans 1 to 35 (MQTRNTFSWIREEITRSISVSLIIYIITWASISSA). Heme contacts are provided by Tyr-36, Cys-56, Cys-59, and His-60. The chain crosses the membrane as a helical span at residues 286–305 (VQGLLFFLGSVVLAQIFLVL).

This sequence belongs to the cytochrome f family. As to quaternary structure, the 4 large subunits of the cytochrome b6-f complex are cytochrome b6, subunit IV (17 kDa polypeptide, petD), cytochrome f and the Rieske protein, while the 4 small subunits are PetG, PetL, PetM and PetN. The complex functions as a dimer. Requires heme as cofactor.

Its subcellular location is the plastid. It localises to the chloroplast thylakoid membrane. Functionally, component of the cytochrome b6-f complex, which mediates electron transfer between photosystem II (PSII) and photosystem I (PSI), cyclic electron flow around PSI, and state transitions. This chain is Cytochrome f (petA), found in Arabidopsis thaliana (Mouse-ear cress).